Consider the following 236-residue polypeptide: Carbonyl reductase family member 4 (236 aa).

NADP(+) contacts are provided by residues 11-14, 34-35, aspartate 55, and 82-84; these read SRGI, RD, and SAG. Residue serine 134 coordinates substrate. Residues tyrosine 147, lysine 151, and 180-182 each bind NADP(+); that span reads IHT. Residue tyrosine 147 is the Proton acceptor of the active site.

The protein belongs to the short-chain dehydrogenases/reductases (SDR) family. Homotetramer (in vitro). Heterotetramer with HSD17B8; contains two molecules each of HSD17B8 and CBR4.

It localises to the mitochondrion matrix. It participates in lipid metabolism; fatty acid biosynthesis. Its function is as follows. The heterotetramer with HSD17B8 has NADH-dependent 3-ketoacyl-acyl carrier protein reductase activity, and thereby plays a role in mitochondrial fatty acid biosynthesis. Within the heterotetramer, HSD17B8 binds NADH; CBR4 binds NADPD. The homotetramer has NADPH-dependent quinone reductase activity. Both homotetramer and the heterotetramer have broad in vitro substrate specificity and can reduce 9,10-phenanthrenequinone, 1,4-benzoquinone and various other o-quinones and p-quinones. In Xenopus tropicalis (Western clawed frog), this protein is Carbonyl reductase family member 4 (cbr4).